The primary structure comprises 401 residues: Phosphoglycerate kinase (401 aa).

Residues Asp23 to Asn25, Arg39, His62 to Arg65, Arg121, and Arg154 contribute to the substrate site. Residues Lys207, Gly298, Glu329, and Gly355–Thr358 contribute to the ATP site.

It belongs to the phosphoglycerate kinase family. Monomer.

The protein resides in the cytoplasm. The catalysed reaction is (2R)-3-phosphoglycerate + ATP = (2R)-3-phospho-glyceroyl phosphate + ADP. It participates in carbohydrate degradation; glycolysis; pyruvate from D-glyceraldehyde 3-phosphate: step 2/5. The chain is Phosphoglycerate kinase from Campylobacter fetus subsp. fetus (strain 82-40).